The primary structure comprises 280 residues: Bis(5'-nucleosyl)-tetraphosphatase, symmetrical (280 aa).

It belongs to the Ap4A hydrolase family.

It catalyses the reaction P(1),P(4)-bis(5'-adenosyl) tetraphosphate + H2O = 2 ADP + 2 H(+). Its function is as follows. Hydrolyzes diadenosine 5',5'''-P1,P4-tetraphosphate to yield ADP. This Shigella boydii serotype 18 (strain CDC 3083-94 / BS512) protein is Bis(5'-nucleosyl)-tetraphosphatase, symmetrical.